Here is a 152-residue protein sequence, read N- to C-terminus: Xanthine-guanine phosphoribosyltransferase (152 aa).

Residues 37–38 (RG), Arg-69, and 88–96 (DDLVDTGGT) each bind 5-phospho-alpha-D-ribose 1-diphosphate. A GMP-binding site is contributed by Arg-69. Residue Asp-89 coordinates Mg(2+). Residues Asp-92 and Ile-135 each coordinate guanine. The xanthine site is built by Asp-92 and Ile-135. Residues 92–96 (DTGGT) and 134–135 (WI) each bind GMP.

The protein belongs to the purine/pyrimidine phosphoribosyltransferase family. XGPT subfamily. As to quaternary structure, homotetramer. Mg(2+) is required as a cofactor.

Its subcellular location is the cell inner membrane. It carries out the reaction GMP + diphosphate = guanine + 5-phospho-alpha-D-ribose 1-diphosphate. It catalyses the reaction XMP + diphosphate = xanthine + 5-phospho-alpha-D-ribose 1-diphosphate. The catalysed reaction is IMP + diphosphate = hypoxanthine + 5-phospho-alpha-D-ribose 1-diphosphate. Its pathway is purine metabolism; GMP biosynthesis via salvage pathway; GMP from guanine: step 1/1. The protein operates within purine metabolism; XMP biosynthesis via salvage pathway; XMP from xanthine: step 1/1. Functionally, purine salvage pathway enzyme that catalyzes the transfer of the ribosyl-5-phosphate group from 5-phospho-alpha-D-ribose 1-diphosphate (PRPP) to the N9 position of the 6-oxopurines guanine and xanthine to form the corresponding ribonucleotides GMP (guanosine 5'-monophosphate) and XMP (xanthosine 5'-monophosphate), with the release of PPi. To a lesser extent, also acts on hypoxanthine. The sequence is that of Xanthine-guanine phosphoribosyltransferase from Escherichia fergusonii (strain ATCC 35469 / DSM 13698 / CCUG 18766 / IAM 14443 / JCM 21226 / LMG 7866 / NBRC 102419 / NCTC 12128 / CDC 0568-73).